The chain runs to 489 residues: Glycogen synthase (489 aa).

Lys-17 is an ADP-alpha-D-glucose binding site.

Belongs to the glycosyltransferase 1 family. Bacterial/plant glycogen synthase subfamily.

It catalyses the reaction [(1-&gt;4)-alpha-D-glucosyl](n) + ADP-alpha-D-glucose = [(1-&gt;4)-alpha-D-glucosyl](n+1) + ADP + H(+). It participates in glycan biosynthesis; glycogen biosynthesis. Synthesizes alpha-1,4-glucan chains using ADP-glucose. The polypeptide is Glycogen synthase (Nitratidesulfovibrio vulgaris (strain ATCC 29579 / DSM 644 / CCUG 34227 / NCIMB 8303 / VKM B-1760 / Hildenborough) (Desulfovibrio vulgaris)).